Reading from the N-terminus, the 101-residue chain is Cell division protein FtsB (101 aa).

Residues Met1 to Ile3 are Cytoplasmic-facing. The chain crosses the membrane as a helical span at residues Val4–Leu21. Residues Gly22 to Gln101 are Periplasmic-facing. A coiled-coil region spans residues Glu33–Leu53.

This sequence belongs to the FtsB family. As to quaternary structure, part of a complex composed of FtsB, FtsL and FtsQ.

It is found in the cell inner membrane. In terms of biological role, essential cell division protein. May link together the upstream cell division proteins, which are predominantly cytoplasmic, with the downstream cell division proteins, which are predominantly periplasmic. This Polynucleobacter necessarius subsp. necessarius (strain STIR1) protein is Cell division protein FtsB.